Reading from the N-terminus, the 254-residue chain is Ribosomal RNA small subunit methyltransferase G (254 aa).

A disordered region spans residues 1–21 (MPEGDGVPRETPSPSVVPESP). The span at 9 to 21 (RETPSPSVVPESP) shows a compositional bias: low complexity. S-adenosyl-L-methionine contacts are provided by residues Gly90, Leu95, 142–143 (AE), and Arg157. The interval 230 to 254 (GPLRAATAPAPPGAAKRRPGKGNRR) is disordered. A compositionally biased stretch (basic residues) spans 244–254 (AKRRPGKGNRR).

The protein belongs to the methyltransferase superfamily. RNA methyltransferase RsmG family.

It is found in the cytoplasm. Specifically methylates the N7 position of guanine in position 518 of 16S rRNA. The polypeptide is Ribosomal RNA small subunit methyltransferase G (Kineococcus radiotolerans (strain ATCC BAA-149 / DSM 14245 / SRS30216)).